Consider the following 512-residue polypeptide: Glutathione-binding protein GsiB (512 aa).

The first 26 residues, 1 to 26 (MARAVHRSGLVALGIATALMASCAFA), serve as a signal peptide directing secretion.

The protein belongs to the bacterial solute-binding protein 5 family. In terms of assembly, the complex is composed of two ATP-binding proteins (GsiA), two transmembrane proteins (GsiC and GsiD) and a solute-binding protein (GsiB).

The protein resides in the periplasm. Part of the ABC transporter complex GsiABCD involved in glutathione import. Binds glutathione. This chain is Glutathione-binding protein GsiB, found in Escherichia coli O1:K1 / APEC.